Consider the following 585-residue polypeptide: Isocitrate dehydrogenase kinase/phosphatase (585 aa).

Residues 315–321 (APGVKGM) and Lys-336 each bind ATP. Asp-371 is an active-site residue.

Belongs to the AceK family.

Its subcellular location is the cytoplasm. It catalyses the reaction L-seryl-[isocitrate dehydrogenase] + ATP = O-phospho-L-seryl-[isocitrate dehydrogenase] + ADP + H(+). Functionally, bifunctional enzyme which can phosphorylate or dephosphorylate isocitrate dehydrogenase (IDH) on a specific serine residue. This is a regulatory mechanism which enables bacteria to bypass the Krebs cycle via the glyoxylate shunt in response to the source of carbon. When bacteria are grown on glucose, IDH is fully active and unphosphorylated, but when grown on acetate or ethanol, the activity of IDH declines drastically concomitant with its phosphorylation. This is Isocitrate dehydrogenase kinase/phosphatase from Photorhabdus laumondii subsp. laumondii (strain DSM 15139 / CIP 105565 / TT01) (Photorhabdus luminescens subsp. laumondii).